The sequence spans 151 residues: Small ribosomal subunit protein uS9 (151 aa).

It belongs to the universal ribosomal protein uS9 family.

This chain is Small ribosomal subunit protein uS9 (rps9), found in Aeropyrum pernix (strain ATCC 700893 / DSM 11879 / JCM 9820 / NBRC 100138 / K1).